The primary structure comprises 353 residues: UPF0283 membrane protein YcjF (353 aa).

Basic and acidic residues predominate over residues 1–19 (MSEPLKPRIDFAEPLKEEP). The tract at residues 1 to 35 (MSEPLKPRIDFAEPLKEEPTSAFKAQQTFSEAESR) is disordered. At 1–69 (MSEPLKPRID…LRPKRSLWRK (69 aa)) the chain is on the periplasmic side. Residues 70–90 (MVMGGLALFGASVVGQGVQWT) traverse the membrane as a helical segment. Topologically, residues 91–99 (MNAWQTQDW) are cytoplasmic. A helical transmembrane segment spans residues 100–120 (VALGGCAAGALIVGAGVGSVV). Residues 121–212 (TEWRRLWRLR…ARREISRFAA (92 aa)) are Periplasmic-facing. The helical transmembrane segment at 213 to 233 (ESTLMIAVSPLALVDMAFIAW) threads the bilayer. Topologically, residues 234-353 (RNLRLINRIA…LQKSKSSPEK (120 aa)) are cytoplasmic.

Belongs to the UPF0283 family.

It is found in the cell inner membrane. The protein is UPF0283 membrane protein YcjF (ycjF) of Salmonella typhimurium (strain LT2 / SGSC1412 / ATCC 700720).